A 611-amino-acid chain; its full sequence is BTB/POZ domain-containing protein 9 (611 aa).

In terms of domain architecture, BTB spans 36–104 (GDVTFVVEKK…IYTGRATLTD (69 aa)). The 99-residue stretch at 142 to 240 (VCMTFDVASL…SLTELLNVVR (99 aa)) folds into the BACK domain. The disordered stretch occupies residues 560–611 (QSAQKDSSDEPGTGGASAAGQQLDPHALQAPSGSSLPSSPGSNSRSPNRQHQ). Residues 586-611 (ALQAPSGSSLPSSPGSNSRSPNRQHQ) are compositionally biased toward low complexity.

The protein is BTB/POZ domain-containing protein 9 (BTBD9) of Bos taurus (Bovine).